A 568-amino-acid chain; its full sequence is Urocanate hydratase (568 aa).

Residues G58 to G59, Q136, G182 to G184, E202, R207, N248 to A249, Q269 to H273, Y279 to L280, and Y328 each bind NAD(+). C416 is a catalytic residue. Position 498 (G498) interacts with NAD(+).

It belongs to the urocanase family. NAD(+) is required as a cofactor.

The protein resides in the cytoplasm. The catalysed reaction is 4-imidazolone-5-propanoate = trans-urocanate + H2O. It participates in amino-acid degradation; L-histidine degradation into L-glutamate; N-formimidoyl-L-glutamate from L-histidine: step 2/3. Catalyzes the conversion of urocanate to 4-imidazolone-5-propionate. This Photobacterium profundum (strain SS9) protein is Urocanate hydratase.